The primary structure comprises 305 residues: tRNA pseudouridine synthase B (305 aa).

Asp-48 (nucleophile) is an active-site residue.

This sequence belongs to the pseudouridine synthase TruB family. Type 1 subfamily.

The enzyme catalyses uridine(55) in tRNA = pseudouridine(55) in tRNA. In terms of biological role, responsible for synthesis of pseudouridine from uracil-55 in the psi GC loop of transfer RNAs. This is tRNA pseudouridine synthase B from Pseudomonas putida (strain GB-1).